The following is a 464-amino-acid chain: ATP synthase subunit beta (464 aa).

153–160 (GGAGVGKT) is an ATP binding site.

The protein belongs to the ATPase alpha/beta chains family. F-type ATPases have 2 components, CF(1) - the catalytic core - and CF(0) - the membrane proton channel. CF(1) has five subunits: alpha(3), beta(3), gamma(1), delta(1), epsilon(1). CF(0) has three main subunits: a(1), b(2) and c(9-12). The alpha and beta chains form an alternating ring which encloses part of the gamma chain. CF(1) is attached to CF(0) by a central stalk formed by the gamma and epsilon chains, while a peripheral stalk is formed by the delta and b chains.

Its subcellular location is the cell inner membrane. The enzyme catalyses ATP + H2O + 4 H(+)(in) = ADP + phosphate + 5 H(+)(out). Produces ATP from ADP in the presence of a proton gradient across the membrane. The catalytic sites are hosted primarily by the beta subunits. The sequence is that of ATP synthase subunit beta from Burkholderia orbicola (strain MC0-3).